The chain runs to 1015 residues: Translation initiation factor IF-2 (1015 aa).

Disordered stretches follow at residues 124 to 144 (EKEP…EKKV), 159 to 179 (EVTV…PKPV), 196 to 230 (KKEE…KEEE), and 250 to 386 (IDLA…VSEE). Basic and acidic residues-rich tracts occupy residues 196–217 (KKEE…EKPV) and 265–315 (SKEE…DPNG). The 171-residue stretch at 514 to 684 (HRAPIVTVMG…LLEAEMLDLK (171 aa)) folds into the tr-type G domain. The tract at residues 523–530 (GHVDHGKT) is G1. 523–530 (GHVDHGKT) contributes to the GTP binding site. The segment at 548–552 (GITQH) is G2. A G3 region spans residues 570-573 (DTPG). GTP contacts are provided by residues 570–574 (DTPGH) and 624–627 (NKID). The segment at 624 to 627 (NKID) is G4. A G5 region spans residues 660-662 (SAK).

The protein belongs to the TRAFAC class translation factor GTPase superfamily. Classic translation factor GTPase family. IF-2 subfamily.

The protein resides in the cytoplasm. Functionally, one of the essential components for the initiation of protein synthesis. Protects formylmethionyl-tRNA from spontaneous hydrolysis and promotes its binding to the 30S ribosomal subunits. Also involved in the hydrolysis of GTP during the formation of the 70S ribosomal complex. The protein is Translation initiation factor IF-2 of Bacteroides fragilis (strain ATCC 25285 / DSM 2151 / CCUG 4856 / JCM 11019 / LMG 10263 / NCTC 9343 / Onslow / VPI 2553 / EN-2).